A 332-amino-acid chain; its full sequence is Ferredoxin--NADP reductase 2 (332 aa).

7 residues coordinate FAD: E37, Q45, Y50, V90, F124, D285, and T326.

The protein belongs to the ferredoxin--NADP reductase type 2 family. In terms of assembly, homodimer. The cofactor is FAD.

It catalyses the reaction 2 reduced [2Fe-2S]-[ferredoxin] + NADP(+) + H(+) = 2 oxidized [2Fe-2S]-[ferredoxin] + NADPH. The polypeptide is Ferredoxin--NADP reductase 2 (yumC) (Bacillus subtilis (strain 168)).